Consider the following 156-residue polypeptide: Low molecular weight phosphotyrosine protein phosphatase (156 aa).

Cys-11 (nucleophile) is an active-site residue. Residue Arg-17 is part of the active site. The active-site Proton donor is the Asp-128.

This sequence belongs to the low molecular weight phosphotyrosine protein phosphatase family.

The protein localises to the cytoplasm. The catalysed reaction is O-phospho-L-tyrosyl-[protein] + H2O = L-tyrosyl-[protein] + phosphate. It catalyses the reaction a phosphate monoester + H2O = an alcohol + phosphate. Functionally, may contribute to dephosphorylation of 'Tyr-15' of cdc2. This Schizosaccharomyces pombe (strain 972 / ATCC 24843) (Fission yeast) protein is Low molecular weight phosphotyrosine protein phosphatase (stp1).